The chain runs to 410 residues: Beta-arrestin-2 (410 aa).

Tyr-48 carries the phosphotyrosine modification. Hydroxyproline; by PHD2 is present on residues Pro-176 and Pro-181. The interaction with TRAF6 stretch occupies residues 241–410; it reads ADICLFSTAQ…KDDDCDDQFC (170 aa). Ser-361 is subject to Phosphoserine. The tract at residues 378–410 is interaction with AP2B1; that stretch reads DTNYATDDDIVFEDFARLRLKGMKDDDCDDQFC. Thr-383 is modified (phosphothreonine; by CaMK2). The [DE]-X(1,2)-F-X-X-[FL]-X-X-X-R motif signature appears at 386 to 396; the sequence is DIVFEDFARLR.

The protein belongs to the arrestin family. Homooligomer; the self-association is mediated by InsP6-binding. Heterooligomer with ARRB1; the association is mediated by InsP6-binding. Interacts with ADRB2 and CHRM2. Interacts with PDE4A. Interacts with PDE4D. Interacts with MAPK10, MAPK1 and MAPK3. Interacts with DRD2. Interacts with FSHR. Interacts with CLTC. Interacts with HTR2C. Interacts with CCR5. Interacts with CXCR4. Interacts with SRC. Interacts with DUSP16; the interaction is interrupted by stimulation of AGTR1 and activation of MAPK10. Interacts with CHUK; the interaction is enhanced stimulation of ADRB2. Interacts with RELA. Interacts with MDM2; the interaction is enhanced by activation of GPCRs. Interacts with SLC9A5. Interacts with TRAF6. Interacts with IGF1R. Interacts with ENG. Interacts with KIR2DL1, KIR2DL3 and KIR2DL4. Interacts with LDLR. Interacts with AP2B1. Interacts with C5AR1. Interacts with RAF1. Interacts with MAP2K1. Interacts with MAPK1. Interacts with MAPK10; the interaction enhances MAPK10 activation by MAP3K5. Interacts with MAP2K4; the interaction is enhanced by presence of MAP3K5 and MAPK10. Interacts with MAP3K5. Interacts with AKT1. Interacts with IKBKB and MAP3K14. Interacts with SMO (activated). Interacts with GSK3A and GSK3B. Associates with protein phosphatase 2A (PP2A). Interacts with CXCR4; the interaction is dependent on C-terminal phosphorylation of CXCR4 and allows activation of MAPK1 and MAPK3. Interacts with GPR143. Interacts with HCK and CXCR1 (phosphorylated). Interacts with ACKR3 and ACKR4. Interacts with ARRDC1; the interaction is direct. Interacts with GPR61, GPR62 and GPR135. Interacts (via NACHT and LRR domains) with NLRP3; this interaction is direct and inducible by omega-3 polyunsaturated fatty acids (PUFAs). Interacts with FFAR4 (via C-terminus); this interaction is stimulated by long-chain fatty acids (LCFAs). Interacts with GPR35. Interacts with GPR84. Interacts with TIGIT; this interaction inhibits the NF-kappa-B pathway. Interacts with TGFBR3. Post-translationally, phosphorylated at Thr-383 in the cytoplasm; probably dephosphorylated at the plasma membrane. The phosphorylation does not regulate internalization and recycling of ADRB2, interaction with clathrin or AP2B1. In terms of processing, the ubiquitination status appears to regulate the formation and trafficking of beta-arrestin-GPCR complexes and signaling. Ubiquitination appears to occur GPCR-specific. Ubiquitinated by MDM2; the ubiquitination is required for rapid internalization of ADRB2. Deubiquitinated by USP33; the deubiquitination leads to a dissociation of the beta-arrestin-GPCR complex. Stimulation of a class A GPCR, such as ADRB2, induces transient ubiquitination and subsequently promotes association with USP33. Stimulation of a class B GPCR promotes a sustained ubiquitination. Deubiquitinated by USP20; allowing USP20 to deubiquitinate TRAF6 leading to inhibition of NF-kappa-B signaling. Hydroxylation by PHD2 modulates the rate of internalization by slowing down recruitment to the plasma membrane and inhibiting subsequent co-internalization with class A receptors. In terms of tissue distribution, predominantly localized in neuronal tissues and in the spleen.

It localises to the cytoplasm. The protein resides in the nucleus. It is found in the cell membrane. The protein localises to the membrane. Its subcellular location is the clathrin-coated pit. It localises to the cytoplasmic vesicle. In terms of biological role, functions in regulating agonist-mediated G-protein coupled receptor (GPCR) signaling by mediating both receptor desensitization and resensitization processes. During homologous desensitization, beta-arrestins bind to the GPRK-phosphorylated receptor and sterically preclude its coupling to the cognate G-protein; the binding appears to require additional receptor determinants exposed only in the active receptor conformation. The beta-arrestins target many receptors for internalization by acting as endocytic adapters (CLASPs, clathrin-associated sorting proteins) and recruiting the GPRCs to the adapter protein 2 complex 2 (AP-2) in clathrin-coated pits (CCPs). However, the extent of beta-arrestin involvement appears to vary significantly depending on the receptor, agonist and cell type. Internalized arrestin-receptor complexes traffic to intracellular endosomes, where they remain uncoupled from G-proteins. Two different modes of arrestin-mediated internalization occur. Class A receptors, like ADRB2, OPRM1, ENDRA, D1AR and ADRA1B dissociate from beta-arrestin at or near the plasma membrane and undergo rapid recycling. Class B receptors, like AVPR2, AGTR1, NTSR1, TRHR and TACR1 internalize as a complex with arrestin and traffic with it to endosomal vesicles, presumably as desensitized receptors, for extended periods of time. Receptor resensitization then requires that receptor-bound arrestin is removed so that the receptor can be dephosphorylated and returned to the plasma membrane. Mediates endocytosis of CCR7 following ligation of CCL19 but not CCL21. Involved in internalization of P2RY1, P2RY4, P2RY6 and P2RY11 and ATP-stimulated internalization of P2RY2. Involved in phosphorylation-dependent internalization of OPRD1 and subsequent recycling or degradation. Involved in ubiquitination of IGF1R. Beta-arrestins function as multivalent adapter proteins that can switch the GPCR from a G-protein signaling mode that transmits short-lived signals from the plasma membrane via small molecule second messengers and ion channels to a beta-arrestin signaling mode that transmits a distinct set of signals that are initiated as the receptor internalizes and transits the intracellular compartment. Acts as a signaling scaffold for MAPK pathways such as MAPK1/3 (ERK1/2) and MAPK10 (JNK3). ERK1/2 and JNK3 activated by the beta-arrestin scaffold are largely excluded from the nucleus and confined to cytoplasmic locations such as endocytic vesicles, also called beta-arrestin signalosomes. Acts as a signaling scaffold for the AKT1 pathway. GPCRs for which the beta-arrestin-mediated signaling relies on both ARRB1 and ARRB2 (codependent regulation) include ADRB2, F2RL1 and PTH1R. For some GPCRs the beta-arrestin-mediated signaling relies on either ARRB1 or ARRB2 and is inhibited by the other respective beta-arrestin form (reciprocal regulation). Increases ERK1/2 signaling in AGTR1- and AVPR2-mediated activation (reciprocal regulation). Involved in CCR7-mediated ERK1/2 signaling involving ligand CCL19. Is involved in type-1A angiotensin II receptor/AGTR1-mediated ERK activity. Is involved in type-1A angiotensin II receptor/AGTR1-mediated MAPK10 activity. Is involved in dopamine-stimulated AKT1 activity in the striatum by disrupting the association of AKT1 with its negative regulator PP2A. Involved in AGTR1-mediated chemotaxis. Appears to function as signaling scaffold involved in regulation of MIP-1-beta-stimulated CCR5-dependent chemotaxis. Involved in attenuation of NF-kappa-B-dependent transcription in response to GPCR or cytokine stimulation by interacting with and stabilizing CHUK. Suppresses UV-induced NF-kappa-B-dependent activation by interacting with CHUK. The function is promoted by stimulation of ADRB2 and dephosphorylation of ARRB2. Involved in IL8-mediated granule release in neutrophils. Involved in p53/TP53-mediated apoptosis by regulating MDM2 and reducing the MDM2-mediated degradation of p53/TP53. May serve as nuclear messenger for GPCRs. Upon stimulation of OR1D2, may be involved in regulation of gene expression during the early processes of fertilization. Also involved in regulation of receptors other than GPCRs. Involved in endocytosis of TGFBR2 and TGFBR3 and down-regulates TGF-beta signaling such as NF-kappa-B activation. Involved in endocytosis of low-density lipoprotein receptor/LDLR. Involved in endocytosis of smoothened homolog/Smo, which also requires GRK2. Involved in endocytosis of SLC9A5. Involved in endocytosis of ENG and subsequent TGF-beta-mediated ERK activation and migration of epithelial cells. Involved in Toll-like receptor and IL-1 receptor signaling through the interaction with TRAF6 which prevents TRAF6 autoubiquitination and oligomerization required for activation of NF-kappa-B and JUN. Involved in insulin resistance by acting as insulin-induced signaling scaffold for SRC, AKT1 and INSR. Involved in regulation of inhibitory signaling of natural killer cells by recruiting PTPN6 and PTPN11 to KIR2DL1. Involved in the internalization of the atypical chemokine receptor ACKR3. Acts as an adapter protein coupling FFAR4 receptor to specific downstream signaling pathways, as well as mediating receptor endocytosis. During the activation step of NLRP3 inflammasome, directly associates with NLRP3 leading to inhibition of pro-inflammatory cytokine release and inhibition of inflammation. In Rattus norvegicus (Rat), this protein is Beta-arrestin-2 (Arrb2).